Here is a 140-residue protein sequence, read N- to C-terminus: MAAKIYHLDVVSAEKQMFSGLVEKIQVTGSEGELGIFPGHAPLLTAIKPGMVRIVKEHGNEEYIYLSGGVLEVQPSTVTVLADTAIRGEDLDEARAMESKRKAEEHINNSHGDIDYAQASAELSKALAKLRVIELTKKAM.

The protein belongs to the ATPase epsilon chain family. In terms of assembly, F-type ATPases have 2 components, CF(1) - the catalytic core - and CF(0) - the membrane proton channel. CF(1) has five subunits: alpha(3), beta(3), gamma(1), delta(1), epsilon(1). CF(0) has three main subunits: a, b and c.

It localises to the cell inner membrane. Its function is as follows. Produces ATP from ADP in the presence of a proton gradient across the membrane. This Sodalis glossinidius (strain morsitans) protein is ATP synthase epsilon chain.